Reading from the N-terminus, the 139-residue chain is Mediator of RNA polymerase II transcription subunit 21 (139 aa).

The tract at residues 28–58 (DAPPVQLSPNYPEPPATTTVTDDATPFPEQP) is disordered. The span at 43 to 54 (ATTTVTDDATPF) shows a compositional bias: low complexity. A coiled-coil region spans residues 92-132 (RIAELQVENDLVGQELQKQLEAAEKELKQVQELFGQAADNC).

This sequence belongs to the Mediator complex subunit 21 family. Component of the Mediator complex. Interacts with HUB1.

It localises to the nucleus. Its function is as follows. Component of the Mediator complex, a coactivator involved in the regulated transcription of nearly all RNA polymerase II-dependent genes. Mediator functions as a bridge to convey information from gene-specific regulatory proteins to the basal RNA polymerase II transcription machinery. Mediator is recruited to promoters by direct interactions with regulatory proteins and serves as a scaffold for the assembly of a functional preinitiation complex with RNA polymerase II and the general transcription factors. Required for embryo development and defense against necrotrophic fungal pathogens. The chain is Mediator of RNA polymerase II transcription subunit 21 (MED21) from Arabidopsis thaliana (Mouse-ear cress).